Reading from the N-terminus, the 378-residue chain is Lysocardiolipin acyltransferase 1 (378 aa).

The next 2 membrane-spanning stretches (helical) occupy residues phenylalanine 9–leucine 29 and isoleucine 46–valine 66. An HXXXXD motif motif is present at residues histidine 85–aspartate 90. 2 helical membrane passes run leucine 302 to threonine 322 and phenylalanine 336 to leucine 358.

The protein belongs to the 1-acyl-sn-glycerol-3-phosphate acyltransferase family.

The protein resides in the endoplasmic reticulum membrane. It carries out the reaction a 1-acyl-sn-glycero-3-phosphate + an acyl-CoA = a 1,2-diacyl-sn-glycero-3-phosphate + CoA. The catalysed reaction is a 1-acyl-sn-glycero-3-phospho-(1D-myo-inositol) + an acyl-CoA = a 1,2-diacyl-sn-glycero-3-phospho-(1D-myo-inositol) + CoA. It catalyses the reaction 1-acyl-sn-glycero-3-phospho-(1'-sn-glycerol) + an acyl-CoA = a 1,2-diacyl-sn-glycero-3-phospho-(1'-sn-glycerol) + CoA. The enzyme catalyses 1-hexadecanoyl-sn-glycero-3-phosphate + (9Z)-octadecenoyl-CoA = 1-hexadecanoyl-2-(9Z-octadecenoyl)-sn-glycero-3-phosphate + CoA. It carries out the reaction 1-(9Z-octadecenoyl)-sn-glycero-3-phosphate + (9Z)-octadecenoyl-CoA = 1,2-di-(9Z-octadecenoyl)-sn-glycero-3-phosphate + CoA. The catalysed reaction is 1-(9Z,12Z)-octadecadienoyl-sn-glycero-3-phosphate + (9Z)-octadecenoyl-CoA = 1-(9Z,12Z)-octadecadienoyl-2-(9Z)-octadecenoyl-sn-glycero-3-phosphate + CoA. It catalyses the reaction 1-(9Z,12Z,15Z)-octadecatrienoyl-sn-glycero-3-phosphate + (9Z)-octadecenoyl-CoA = 1-(9Z,12Z,15Z)-octadecatrienoyl-2-(9Z)-octadecenoyl-sn-glycero-3-phosphate + CoA. The enzyme catalyses 1-(9Z-octadecenoyl)-sn-glycero-3-phosphate + hexadecanoyl-CoA = 1-(9Z)-octadecenoyl-2-hexadecanoyl-sn-glycero-3-phosphate + CoA. It carries out the reaction 1-(9Z-octadecenoyl)-sn-glycero-3-phosphate + octadecanoyl-CoA = 1-(9Z-octadecenoyl)-2-octadecanoyl-sn-glycero-3-phosphate + CoA. The catalysed reaction is 1-acyl-sn-glycero-3-phospho-(1'-sn-glycerol) + (9Z)-octadecenoyl-CoA = 1-acyl-2-(9Z-octadecenoyl)-sn-glycero-3-phospho-(1'-sn-glycerol) + CoA. It catalyses the reaction a 1-acyl-sn-glycero-3-phospho-(1D-myo-inositol) + (9Z)-octadecenoyl-CoA = a 1-acyl-2-(9Z-octadecenoyl)-sn-glycero-3-phospho-(1D-myo-inositol) + CoA. The enzyme catalyses 1-hexadecanoyl-sn-glycero-3-phospho-(1D-myo-inositol) + hexadecanoyl-CoA = 1,2-dihexadecanoyl-sn-glycero-3-phospho-(1D-myo-inositol) + CoA. It carries out the reaction 1-hexadecanoyl-sn-glycero-3-phospho-(1D-myo-inositol) + octadecanoyl-CoA = 1-hexadecanoyl-2-octadecanoyl-sn-glycero-3-phospho-(1D-myo-inositol) + CoA. The catalysed reaction is 1-hexadecanoyl-sn-glycero-3-phospho-(1D-myo-inositol) + (9Z)-octadecenoyl-CoA = 1-hexadecanoyl-2-(9Z-octadecenoyl)-sn-glycero-3-phospho-(1D-myo-inositol) + CoA. It catalyses the reaction 1-hexadecanoyl-sn-glycero-3-phospho-(1D-myo-inositol) + (9Z,12Z)-octadecadienoyl-CoA = 1-hexadecanoyl-2-(9Z,12Z-octadecadienoyl)-sn-glycero-3-phospho-(1D-myo-inositol) + CoA. The enzyme catalyses 1-hexadecanoyl-sn-glycero-3-phospho-(1D-myo-inositol) + (5Z,8Z,11Z,14Z)-eicosatetraenoyl-CoA = 1-hexadecanoyl-2-(5Z,8Z,11Z,14Z-eicosatetraenoyl)-sn-glycero-3-phospho-D-myo-inositol + CoA. It carries out the reaction 1-hexadecanoyl-sn-glycero-3-phospho-(1'-sn-glycerol) + hexadecanoyl-CoA = 1,2-dihexadecanoyl-sn-glycero-3-phospho-(1'-sn-glycerol) + CoA. The catalysed reaction is 1-hexadecanoyl-sn-glycero-3-phospho-(1'-sn-glycerol) + octadecanoyl-CoA = 1-hexadecanoyl-2-octadecanoyl-sn-glycero-3-phospho-(1'-sn-glycerol) + CoA. It catalyses the reaction 1-hexadecanoyl-sn-glycero-3-phospho-(1'-sn-glycerol) + (9Z)-octadecenoyl-CoA = 1-hexadecanoyl-2-(9Z-octadecenoyl)-sn-glycero-3-phospho-(1'-sn-glycerol) + CoA. The enzyme catalyses 1-hexadecanoyl-sn-glycero-3-phospho-(1'-sn-glycerol) + (9Z,12Z)-octadecadienoyl-CoA = 1-hexadecanoyl-2-(9Z,12Z-octadecadienoyl)-sn-glycero-3-phospho-(1'-sn-glycerol) + CoA. It carries out the reaction 1-tetradecanoyl-sn-glycero-3-phospho-(1'-sn-glycerol) + (9Z)-octadecenoyl-CoA = 1-tetradecanoyl-2-(9Z-octadecenoyl)-sn-glycero-3-phospho-(1'-sn-glycerol) + CoA. The catalysed reaction is 1-octadecanoyl-sn-glycero-3-phospho-(1'-sn-glycerol) + (9Z)-octadecenoyl-CoA = 1-octadecanoyl-2-(9Z-octadecenoyl)-sn-glycero-3-phospho-(1'-sn-glycerol) + CoA. It catalyses the reaction 1-(9Z-octadecenoyl)-sn-glycero-3-phospho-(1'-sn-glycerol) + (9Z)-octadecenoyl-CoA = 1,2-di-(9Z-octadecenoyl)-sn-glycero-3-phospho-(1'-sn-glycerol) + CoA. The enzyme catalyses 1-hexadecanoyl-sn-glycero-3-phospho-(1D-myo-inositol) + dodecanoyl-CoA = 1-hexadecanoyl-2-dodecanoyl-sn-glycero-3-phospho-(1D-myo-inositol) + CoA. It carries out the reaction 1',3'-bis-[1-acyl-sn-glycero-3-phospho]-glycerol + (9Z)-octadecenoyl-CoA = 1'-[1-acyl-2-(9Z)-octadecenoyl-sn-glycero-3-phospho],3'-[1-acyl,2-hydroxy-sn-glycero-3-phospho]-glycerol + CoA. The catalysed reaction is 1'-[1,2-diacyl-sn-glycero-3-phospho],3'-[1-acyl-sn-glycero-3-phospho]-glycerol + (9Z)-octadecenoyl-CoA = 1'-[1,2-diacyl-sn-glycero-3-phospho],3'-[1-acyl,2-(9Z)-octadecenoyl-sn-glycero-3-phospho]-glycerol + CoA. It catalyses the reaction 1'-[1,2-diacyl-sn-glycero-3-phospho],3'-[1-acyl-sn-glycero-3-phospho]-glycerol + (9Z,12Z)-octadecadienoyl-CoA = 1'-[1,2-diacyl-sn-glycero-3-phospho],3'-[1-acyl,2-(9Z,12Z)-octadecadienoyl-sn-glycero-3-phospho]-glycerol + CoA. The enzyme catalyses 1'-[1,2-diacyl-sn-glycero-3-phospho],3'-[1-acyl-sn-glycero-3-phospho]-glycerol + dodecanoyl-CoA = 1'-[1,2-diacyl-sn-glycero-3-phospho],3'-[1-acyl,2-dodecanoyl-sn-glycero-3-phospho]-glycerol + CoA. It carries out the reaction 1',3'-bis-[1-acyl-sn-glycero-3-phospho]-glycerol + dodecanoyl-CoA = 1'-[1-acyl-2-dodecanoyl-sn-glycero-3-phospho],3'-[1-acyl,2-hydroxy-sn-glycero-3-phospho]-glycerol + CoA. The catalysed reaction is a 1-acyl-sn-glycero-3-phosphate + (9Z)-octadecenoyl-CoA = a 1-acyl-2-(9Z-octadecenoyl)-sn-glycero-3-phosphate + CoA. It catalyses the reaction 1',3'-bis-[1-acyl-sn-glycero-3-phospho]-glycerol + (9Z,12Z)-octadecadienoyl-CoA = 1'-[1-acyl-2-(9Z,12Z)-octadecadienoyl-sn-glycero-3-phospho],3'-[1-acyl,2-hydroxy-sn-glycero-3-phospho]-glycerol + CoA. The enzyme catalyses 1',3'-bis-[1-acyl-sn-glycero-3-phospho]-glycerol + hexadecanoyl-CoA = 1'-[1-acyl-2-hexadecanoyl-sn-glycero-3-phospho],3'-[1-acyl,2-hydroxy-sn-glycero-3-phospho]-glycerol + CoA. It carries out the reaction 1',3'-bis-[1-acyl-sn-glycero-3-phospho]-glycerol + octadecanoyl-CoA = 1'-[1-acyl-2-octadecanoyl-sn-glycero-3-phospho],3'-[1-acyl,2-hydroxy-sn-glycero-3-phospho]-glycerol + CoA. The catalysed reaction is 1'-[1,2-diacyl-sn-glycero-3-phospho],3'-[1-acyl-sn-glycero-3-phospho]-glycerol + octanoyl-CoA = 1'-[1,2-diacyl-sn-glycero-3-phospho],3'-[1-acyl,2-octanoyl-sn-glycero-3-phospho]-glycerol + CoA. It catalyses the reaction 1',3'-bis-[1-acyl-sn-glycero-3-phospho]-glycerol + octanoyl-CoA = 1'-[1-acyl-2-octanoyl-sn-glycero-3-phospho],3'-[1-acyl,2-hydroxy-sn-glycero-3-phospho]-glycerol + CoA. The enzyme catalyses 1'-[1,2-diacyl-sn-glycero-3-phospho],3'-[1-acyl-sn-glycero-3-phospho]-glycerol + hexadecanoyl-CoA = 1'-[1,2-diacyl-sn-glycero-3-phospho],3'-[1-acyl,2-hexadecanoyl-sn-glycero-3-phospho]-glycerol + CoA. It carries out the reaction 1'-[1,2-diacyl-sn-glycero-3-phospho],3'-[1-acyl-sn-glycero-3-phospho]-glycerol + (5Z,8Z,11Z,14Z)-eicosatetraenoyl-CoA = 1'-[1,2-diacyl-sn-glycero-3-phospho],3'-[1-acyl,2-(5Z,8Z,11Z,14Z)-eicosatetraenoyl-sn-glycero-3-phospho]-glycerol + CoA. The catalysed reaction is 1',3'-bis-[1-acyl-sn-glycero-3-phospho]-glycerol + (5Z,8Z,11Z,14Z)-eicosatetraenoyl-CoA = 1'-[1-acyl-2-(5Z,8Z,11Z,14Z)-eicosatetraenoyl-sn-glycero-3-phospho],3'-[1-acyl,2-hydroxy-sn-glycero-3-phospho]-glycerol + CoA. It catalyses the reaction a 1-acyl-sn-glycero-3-phospho-(1D-myo-inositol) + octadecanoyl-CoA = a 1-acyl-2-octadecanoyl-sn-glycero-3-phospho-(1D-myo-inositol) + CoA. The enzyme catalyses a 2-acyl-sn-glycero-3-phospho-D-myo-inositol + octadecanoyl-CoA = 1-octadecanoyl-2-acyl-sn-glycero-3-phospho-1D-myo-inositol + CoA. The protein operates within phospholipid metabolism; CDP-diacylglycerol biosynthesis; CDP-diacylglycerol from sn-glycerol 3-phosphate: step 2/3. Its function is as follows. Exhibits acyl-CoA:lysocardiolipin acyltransferase (ALCAT) activity; catalyzes the reacylation of lyso-cardiolipin to cardiolipin (CL), a key step in CL remodeling. Recognizes both monolysocardiolipin and dilysocardiolipin as substrates with a preference for linoleoyl-CoA and oleoyl-CoA as acyl donors. Also exhibits 1-acyl-sn-glycerol-3-phosphate acyltransferase activity (AGPAT) activity; converts 1-acyl-sn-glycerol-3- phosphate (lysophosphatidic acid or LPA) into 1,2-diacyl-sn-glycerol-3- phosphate (phosphatidic acid or PA) by incorporating an acyl moiety at the sn-2 position of the glycerol backbone. Possesses both lysophosphatidylinositol acyltransferase (LPIAT) and lysophosphatidylglycerol acyltransferase (LPGAT) activities. Required for establishment of the hematopoietic and endothelial lineages. The sequence is that of Lysocardiolipin acyltransferase 1 (LCLAT1) from Gallus gallus (Chicken).